Here is a 180-residue protein sequence, read N- to C-terminus: MIIYLHGFDSTSPGNHEKVLQLQFIDEDVRLISYSTLHPRHDMQHLLKQVDKMIQHSDDDRPLICGVGLGGFWAERVGFLCDIRQVIVNPNLFPQENMGGKIDRPEEYVDIATKCVANFREKNRDRCMVMLSRHDEMLDSQRSAQMLGAYYEIVWDDIQTHKFKSISPHLQRIKAFKTLG.

Belongs to the UPF0227 family.

The protein is UPF0227 protein PC1_2487 of Pectobacterium carotovorum subsp. carotovorum (strain PC1).